We begin with the raw amino-acid sequence, 392 residues long: Probable tRNA pseudouridine synthase D 1 (392 aa).

Catalysis depends on aspartate 92, which acts as the Nucleophile. The region spanning 167–354 (YFLNYYGVQR…FIGDRRAMIG (188 aa)) is the TRUD domain.

The protein belongs to the pseudouridine synthase TruD family.

It carries out the reaction uridine(13) in tRNA = pseudouridine(13) in tRNA. Could be responsible for synthesis of pseudouridine from uracil-13 in transfer RNAs. The chain is Probable tRNA pseudouridine synthase D 1 from Methanocaldococcus jannaschii (strain ATCC 43067 / DSM 2661 / JAL-1 / JCM 10045 / NBRC 100440) (Methanococcus jannaschii).